We begin with the raw amino-acid sequence, 507 residues long: ATP synthase subunit alpha, chloroplastic (507 aa).

170–177 (GDRQTGKT) is an ATP binding site.

The protein belongs to the ATPase alpha/beta chains family. As to quaternary structure, F-type ATPases have 2 components, CF(1) - the catalytic core - and CF(0) - the membrane proton channel. CF(1) has five subunits: alpha(3), beta(3), gamma(1), delta(1), epsilon(1). CF(0) has four main subunits: a, b, b' and c.

It is found in the plastid. The protein resides in the chloroplast thylakoid membrane. It carries out the reaction ATP + H2O + 4 H(+)(in) = ADP + phosphate + 5 H(+)(out). Functionally, produces ATP from ADP in the presence of a proton gradient across the membrane. The alpha chain is a regulatory subunit. The polypeptide is ATP synthase subunit alpha, chloroplastic (Pelargonium hortorum (Common geranium)).